Here is a 280-residue protein sequence, read N- to C-terminus: Orotidine 5'-phosphate decarboxylase (280 aa).

The active-site Proton donor is the lysine 96.

It belongs to the OMP decarboxylase family. Type 2 subfamily.

The enzyme catalyses orotidine 5'-phosphate + H(+) = UMP + CO2. It functions in the pathway pyrimidine metabolism; UMP biosynthesis via de novo pathway; UMP from orotate: step 2/2. The polypeptide is Orotidine 5'-phosphate decarboxylase (Parabacteroides distasonis (strain ATCC 8503 / DSM 20701 / CIP 104284 / JCM 5825 / NCTC 11152)).